Reading from the N-terminus, the 116-residue chain is ATP-dependent Clp protease adapter protein ClpS (116 aa).

Over residues 1–11 (MRRINTIMQGK) the composition is skewed to polar residues. A disordered region spans residues 1–23 (MRRINTIMQGKTNGGNGPESGTV).

The protein belongs to the ClpS family. Binds to the N-terminal domain of the chaperone ClpA.

In terms of biological role, involved in the modulation of the specificity of the ClpAP-mediated ATP-dependent protein degradation. The sequence is that of ATP-dependent Clp protease adapter protein ClpS from Brucella abortus (strain S19).